The following is a 314-amino-acid chain: 2-desacetyl-2-hydroxyethyl bacteriochlorophyllide A dehydrogenase (314 aa).

The protein operates within porphyrin-containing compound metabolism; bacteriochlorophyll biosynthesis (light-independent). This protein catalyzes the penultimate step in bacteriochlorophyll a biosynthesis. The sequence is that of 2-desacetyl-2-hydroxyethyl bacteriochlorophyllide A dehydrogenase (bchC) from Rhodobacter capsulatus (strain ATCC BAA-309 / NBRC 16581 / SB1003).